A 74-amino-acid polypeptide reads, in one-letter code: Lantibiotic lichenicidin A1 (74 aa).

A propeptide spanning residues 1–42 (MSKKEMILSWKNPMYRTESSYHPAGNILKELQEEEQHSIAGG) is cleaved from the precursor. T43 carries the 2-oxobutanoic acid modification. Residues 45-49 (TLSTC) constitute a cross-link (beta-methyllanthionine (Thr-Cys)). At S47 the chain carries 2,3-didehydroalanine (Ser). A (Z)-2,3-didehydrobutyrine modification is found at T48. The segment at residues 53-63 (SKPLGNNGYLC) is a cross-link (lanthionine (Ser-Cys)). 2 consecutive cross-links (beta-methyllanthionine (Thr-Cys)) follow at residues 64 to 69 (TVTKEC) and 66 to 73 (TKECMPSC).

In terms of processing, maturation of lantibiotics involves the enzymatic conversion of Thr, and Ser into dehydrated AA and the formation of thioether bonds with cysteine. This is followed by membrane translocation and cleavage of the modified precursor.

It localises to the secreted. It is found in the cell wall. Its function is as follows. Lanthionine-containing peptide antibiotic (lantibiotic) active on Gram-positive bacteria. The bactericidal activity of lantibiotics is based on depolarization of energized bacterial cytoplasmic membranes, initiated by the formation of aqueous transmembrane pores. When present individually, LchA1 exhibits activity towards L.lactis HP. When combined with LchA2, it displays activity towards a broad spectrum of non-pathogenic and pathogenic Gram-positive bacteria including strains of L.monocytogenes, methicillin-resistant S.aureus, S.pneumoniae and strains of vancomycin-resistant enterococci, but not towards E.faecium L4001 and BM4147-1. Combined LchA1 and LchA2 peptides also inhibit Bacillus sp. HIL-Y85/54728, L.lactis DPC3417 and B.halodurans C-125, which produce lantibiotics themselves. Inactivated by proteinase K and pronase E, but not by trypsin and chymotrypsin. The sequence is that of Lantibiotic lichenicidin A1 from Bacillus licheniformis (strain ATCC 14580 / DSM 13 / JCM 2505 / CCUG 7422 / NBRC 12200 / NCIMB 9375 / NCTC 10341 / NRRL NRS-1264 / Gibson 46).